The following is a 200-amino-acid chain: uncharacterized protein (200 aa).

This is an uncharacterized protein from Methanocaldococcus jannaschii (strain ATCC 43067 / DSM 2661 / JAL-1 / JCM 10045 / NBRC 100440) (Methanococcus jannaschii).